We begin with the raw amino-acid sequence, 319 residues long: Red chlorophyll catabolite reductase, chloroplastic (319 aa).

Residues 1-39 (MAMIFCNTLYSSSSPSYLSPLTSKPSRFSKNLRPRAQFQ) constitute a chloroplast transit peptide. Red chlorophyll catabolite is bound by residues Glu154 and 207–209 (YVS). A coiled-coil region spans residues 255–286 (LERCVKEEEEKIVVGEEERMELERRDKSFRRK). A red chlorophyll catabolite-binding site is contributed by Asp291.

Homodimer. Interacts with HCAR. Interacts with SGR1, NYC1, NOL, PPH, PAO and the LHCII complex. Part of a SGR1-CCE-LHCII complex, which acts in chlorophyll breakdown. Expressed in all tissues tested, including roots.

It localises to the plastid. Its subcellular location is the chloroplast stroma. The protein localises to the chloroplast thylakoid membrane. The catalysed reaction is primary fluorescent chlorophyll catabolite + 2 oxidized [2Fe-2S]-[ferredoxin] = red chlorophyll catabolite + 2 reduced [2Fe-2S]-[ferredoxin] + 3 H(+). The protein operates within porphyrin-containing compound metabolism; chlorophyll degradation. Its function is as follows. Catalyzes the key reaction of chlorophyll catabolism, porphyrin macrocycle cleavage of pheophorbide a (pheide a) to a primary fluorescent catabolite (pFCC). Works in a two-step reaction with pheophorbide a oxygenase (PaO) by reducing the C20/C1 double bond of the intermediate, RCC. Belongs to the chlorophyll catabolic enzymes (CCEs). The chain is Red chlorophyll catabolite reductase, chloroplastic from Arabidopsis thaliana (Mouse-ear cress).